We begin with the raw amino-acid sequence, 315 residues long: Ribosomal protein L11 methyltransferase (315 aa).

S-adenosyl-L-methionine-binding residues include Thr162, Gly183, Asp205, and Asn248.

It belongs to the methyltransferase superfamily. PrmA family.

It localises to the cytoplasm. It catalyses the reaction L-lysyl-[protein] + 3 S-adenosyl-L-methionine = N(6),N(6),N(6)-trimethyl-L-lysyl-[protein] + 3 S-adenosyl-L-homocysteine + 3 H(+). In terms of biological role, methylates ribosomal protein L11. The sequence is that of Ribosomal protein L11 methyltransferase from Oceanobacillus iheyensis (strain DSM 14371 / CIP 107618 / JCM 11309 / KCTC 3954 / HTE831).